Here is a 419-residue protein sequence, read N- to C-terminus: ERLTKRYVELVIVADHRMFTKYNGNLKKIRKWIYQIVNTINEIYIPLNIRVALVRLEIWSNGDLIDVTSAANVTLKSFGNWRVTNLLRRKSHDNAQLLTAIDLDEETLGLAPLGTMCDPKLSIGIVQDHSPINLLVAVTMAHELGHNLGMVHDENRCHCSTPACVMCAVLRQRPSYEFSDCSLNHYRTFIINYNPQCILNEPLQTDIISPPVCGNELLEVGEECDCGSPRTCRDPCCDAATCKLHSWVECESGECCQQCKFTSAGNVCRPARSECDIAESCTGQSADCPTDDFHRNGKPCLHNFGYCYNGNCPIMYHQCYALWGSNVTVAPDACFDINQSGNNSFYCRKENGVNIPCAQEDVKCGRLFCNVNDFLCRHKYSDDGMVDHGTKCADGKVCKNRQCVDVTTAYKSTSGFSQI.

The Peptidase M12B domain maps to 6–202 (RYVELVIVAD…YNPQCILNEP (197 aa)). Glutamate 9 serves as a coordination point for Ca(2+). Asparagine 72 carries an N-linked (GlcNAc...) asparagine glycan. Aspartate 93 contributes to the Ca(2+) binding site. Disulfide bonds link cysteine 117–cysteine 197, cysteine 157–cysteine 181, and cysteine 159–cysteine 164. Histidine 142 contributes to the Zn(2+) binding site. The active site involves glutamate 143. Zn(2+)-binding residues include histidine 146 and histidine 152. 8 residues coordinate Ca(2+): cysteine 197, asparagine 200, valine 212, asparagine 215, leucine 217, glutamate 219, glutamate 222, and aspartate 225. The Disintegrin domain occupies 210–296 (PPVCGNELLE…DCPTDDFHRN (87 aa)). 14 cysteine pairs are disulfide-bonded: cysteine 213–cysteine 242, cysteine 224–cysteine 237, cysteine 226–cysteine 232, cysteine 236–cysteine 259, cysteine 250–cysteine 256, cysteine 255–cysteine 281, cysteine 268–cysteine 288, cysteine 275–cysteine 307, cysteine 300–cysteine 312, cysteine 319–cysteine 369, cysteine 334–cysteine 376, cysteine 347–cysteine 357, cysteine 364–cysteine 398, and cysteine 392–cysteine 403. The short motif at 274–276 (ECD) is the D/ECD-tripeptide element. N-linked (GlcNAc...) asparagine glycans are attached at residues asparagine 326, asparagine 338, and asparagine 342.

The protein belongs to the venom metalloproteinase (M12B) family. P-III subfamily. P-IIIa sub-subfamily. Monomer. Zn(2+) serves as cofactor. Expressed by the venom gland.

The protein resides in the secreted. The catalysed reaction is Cleavage of 3-Asn-|-Gln-4, 5-His-|-Leu-6, 10-His-|-Leu-11, 14-Ala-|-Leu-15 and 16-Tyr-|-Leu-17 in insulin B chain. Removes C-terminal Leu from small peptides.. Its function is as follows. Snake venom zinc metalloproteinase-disintegrin that causes hemorrhage by provoking the degradation of the sub-endothelial matrix proteins (fibronectin, laminin, type IV collagen, nidogen, and gelatins) and disturbances in platelet function. The recombinant cysteine-rich domain interacts with the alpha-2/beta-1 integrin (ITGA2/ITGB1) (collagen receptor), and inhibits the platelet aggregation induced by collagen. The chain is Zinc metalloproteinase-disintegrin-like atrolysin-A from Crotalus atrox (Western diamondback rattlesnake).